The sequence spans 292 residues: Ribosomal protein L11 methyltransferase (292 aa).

S-adenosyl-L-methionine-binding residues include T144, G165, D187, and N229.

The protein belongs to the methyltransferase superfamily. PrmA family.

It localises to the cytoplasm. The catalysed reaction is L-lysyl-[protein] + 3 S-adenosyl-L-methionine = N(6),N(6),N(6)-trimethyl-L-lysyl-[protein] + 3 S-adenosyl-L-homocysteine + 3 H(+). Functionally, methylates ribosomal protein L11. This Pseudomonas fluorescens (strain SBW25) protein is Ribosomal protein L11 methyltransferase.